Here is an 882-residue protein sequence, read N- to C-terminus: Valine--tRNA ligase (882 aa).

The 'HIGH' region signature appears at 42 to 52 (PNVTGKLHLGH). The short motif at 522 to 526 (KMSKS) is the 'KMSKS' region element. Residue Lys525 coordinates ATP. The stretch at 849 to 873 (KIEIEKKKYESYCKQYKKLLESKNN) forms a coiled coil.

The protein belongs to the class-I aminoacyl-tRNA synthetase family. ValS type 1 subfamily. As to quaternary structure, monomer.

The protein localises to the cytoplasm. It carries out the reaction tRNA(Val) + L-valine + ATP = L-valyl-tRNA(Val) + AMP + diphosphate. In terms of biological role, catalyzes the attachment of valine to tRNA(Val). As ValRS can inadvertently accommodate and process structurally similar amino acids such as threonine, to avoid such errors, it has a 'posttransfer' editing activity that hydrolyzes mischarged Thr-tRNA(Val) in a tRNA-dependent manner. This is Valine--tRNA ligase from Onion yellows phytoplasma (strain OY-M).